A 525-amino-acid chain; its full sequence is Putative ribose/galactose/methyl galactoside import ATP-binding protein (525 aa).

Polar residues predominate over residues 1–15; the sequence is MFGSATANPPAQRNL. The segment at 1–23 is disordered; it reads MFGSATANPPAQRNLPSGDGDGG. ABC transporter domains are found at residues 33-269 and 279-523; these read LEIS…VGRE and KPAG…SGHK. 65–72 contributes to the ATP binding site; it reads GENGAGKS.

Belongs to the ABC transporter superfamily. Carbohydrate importer 2 (CUT2) (TC 3.A.1.2) family.

It localises to the cell inner membrane. The catalysed reaction is D-ribose(out) + ATP + H2O = D-ribose(in) + ADP + phosphate + H(+). It catalyses the reaction D-galactose(out) + ATP + H2O = D-galactose(in) + ADP + phosphate + H(+). Functionally, part of an ABC transporter complex involved in carbohydrate import. Could be involved in ribose, galactose and/or methyl galactoside import. Responsible for energy coupling to the transport system. This Pseudomonas syringae pv. syringae (strain B728a) protein is Putative ribose/galactose/methyl galactoside import ATP-binding protein.